The chain runs to 271 residues: tRNA (guanine-N(7)-)-methyltransferase (271 aa).

Positions 95, 120, 147, and 175 each coordinate S-adenosyl-L-methionine. Residue D175 is part of the active site. Residues K179, D211, and 249-252 (THFE) each bind substrate.

This sequence belongs to the class I-like SAM-binding methyltransferase superfamily. TrmB family.

The catalysed reaction is guanosine(46) in tRNA + S-adenosyl-L-methionine = N(7)-methylguanosine(46) in tRNA + S-adenosyl-L-homocysteine. It functions in the pathway tRNA modification; N(7)-methylguanine-tRNA biosynthesis. Its function is as follows. Catalyzes the formation of N(7)-methylguanine at position 46 (m7G46) in tRNA. The protein is tRNA (guanine-N(7)-)-methyltransferase of Rhodopirellula baltica (strain DSM 10527 / NCIMB 13988 / SH1).